The sequence spans 536 residues: uncharacterized protein (536 aa).

2 disordered regions span residues 1–76 (MSFT…SPAS) and 204–237 (NWNS…SNKS). Low complexity-rich tracts occupy residues 7-76 (TSSV…SPAS) and 204-234 (NWNS…PSKS). Residues 247–267 (CSVAIPVGVVLILIGLGIFLW) form a helical membrane-spanning segment. Disordered stretches follow at residues 287–354 (YGFN…LLGG) and 373–536 (DASD…LNLF). The span at 290–326 (NPNQPSNFRSPNRAPSTNNRYRGWNGSPTPAAGNNTN) shows a compositional bias: polar residues. The segment covering 327 to 350 (GRPVAPRPSAGAGGANPPAASQPG) has biased composition (low complexity). Residues 351–371 (LLGGSSNSAGPIAAATAAGVG) traverse the membrane as a helical segment. A compositionally biased stretch (polar residues) spans 403–424 (SASNEAEATMPPSNGSNFSEGL). The segment covering 430 to 454 (ESGPAVGAAGAAAEAAEHSGSGSDS) has biased composition (low complexity). Polar residues predominate over residues 480 to 509 (SYGSRAALSSRSQSNLLSPTSTGASNQPNY). The span at 517–527 (SSSNVSIPRSS) shows a compositional bias: low complexity.

It localises to the membrane. This is an uncharacterized protein from Schizosaccharomyces pombe (strain 972 / ATCC 24843) (Fission yeast).